The primary structure comprises 148 residues: Flavodoxin (148 aa).

The Flavodoxin-like domain occupies 4–145; it reads VLIVYGSTTG…DVSAWAGRVV (142 aa).

The protein belongs to the flavodoxin family. Requires FMN as cofactor.

In terms of biological role, low-potential electron donor to a number of redox enzymes. The sequence is that of Flavodoxin from Nitratidesulfovibrio vulgaris (strain DSM 19637 / Miyazaki F) (Desulfovibrio vulgaris).